Reading from the N-terminus, the 546-residue chain is Chaperonin GroEL (546 aa).

Residues threonine 30–proline 33, lysine 51, aspartate 87–threonine 91, glycine 415, and aspartate 496 each bind ATP. The disordered stretch occupies residues glutamate 527–phenylalanine 546. Over residues alanine 534 to phenylalanine 546 the composition is skewed to gly residues.

This sequence belongs to the chaperonin (HSP60) family. As to quaternary structure, forms a cylinder of 14 subunits composed of two heptameric rings stacked back-to-back. Interacts with the co-chaperonin GroES.

The protein resides in the cytoplasm. It catalyses the reaction ATP + H2O + a folded polypeptide = ADP + phosphate + an unfolded polypeptide.. Functionally, together with its co-chaperonin GroES, plays an essential role in assisting protein folding. The GroEL-GroES system forms a nano-cage that allows encapsulation of the non-native substrate proteins and provides a physical environment optimized to promote and accelerate protein folding. This is Chaperonin GroEL from Rhodospirillum centenum (strain ATCC 51521 / SW).